We begin with the raw amino-acid sequence, 265 residues long: Imidazole glycerol phosphate synthase subunit HisF (265 aa).

Active-site residues include aspartate 12 and aspartate 131.

Belongs to the HisA/HisF family. As to quaternary structure, heterodimer of HisH and HisF.

The protein localises to the cytoplasm. It carries out the reaction 5-[(5-phospho-1-deoxy-D-ribulos-1-ylimino)methylamino]-1-(5-phospho-beta-D-ribosyl)imidazole-4-carboxamide + L-glutamine = D-erythro-1-(imidazol-4-yl)glycerol 3-phosphate + 5-amino-1-(5-phospho-beta-D-ribosyl)imidazole-4-carboxamide + L-glutamate + H(+). Its pathway is amino-acid biosynthesis; L-histidine biosynthesis; L-histidine from 5-phospho-alpha-D-ribose 1-diphosphate: step 5/9. IGPS catalyzes the conversion of PRFAR and glutamine to IGP, AICAR and glutamate. The HisF subunit catalyzes the cyclization activity that produces IGP and AICAR from PRFAR using the ammonia provided by the HisH subunit. This Alkalilimnicola ehrlichii (strain ATCC BAA-1101 / DSM 17681 / MLHE-1) protein is Imidazole glycerol phosphate synthase subunit HisF.